Consider the following 218-residue polypeptide: Glutathione S-transferase Mu 6 (218 aa).

The GST N-terminal domain occupies 1–88 (MPVTLGYWDI…YLGRKHNLCG (88 aa)). Residues 7-8 (YW), 46-50 (WLNDK), 59-60 (NL), and 72-73 (QS) each bind glutathione. Residues 90-208 (TEEERIRVDI…KTSRFLPSPV (119 aa)) enclose the GST C-terminal domain. Tyrosine 116 contributes to the substrate binding site.

It belongs to the GST superfamily. Mu family. As to quaternary structure, homodimer. Expressed in liver, stomach and small intestine. Not expressed in spleen, kidney, colon, heart, muscle, brain or lung.

It localises to the cytoplasm. It carries out the reaction RX + glutathione = an S-substituted glutathione + a halide anion + H(+). Functionally, conjugation of reduced glutathione to a wide number of exogenous and endogenous hydrophobic electrophiles. This chain is Glutathione S-transferase Mu 6 (Gstm6), found in Mus musculus (Mouse).